The primary structure comprises 580 residues: Anaphase-promoting complex subunit 7 (580 aa).

10 TPR repeats span residues 50–83, 107–140, 141–175, 253–286, 321–354, 356–388, 390–421, 422–456, 458–490, and 491–523; these read IISF…LFKV, YELK…SRGL, DTHL…CPLC, VLEK…DPYY, AETW…KESH, FAHS…SKNI, TARE…SPDY, SKTM…SPHC, DTVL…QETD, and LMHT…NPQY. A disordered region spans residues 539–580; sequence GIDPDQELDQENDDDDQEEGEGENDQEENDDDDNDDDDEYIS. A compositionally biased stretch (acidic residues) spans 542-580; sequence PDQELDQENDDDDQEEGEGENDQEENDDDDNDDDDEYIS.

The protein belongs to the APC7 family. The APC/C is composed of at least 13 subunits that stay tightly associated throughout the cell cycle: anapc1, anapc2, anapc3, anapc4, anapc5, anapc6, anapc7, anapc8, anapc10, anapc11, cdc20, cdc26 and cdh1.

The protein resides in the nucleus. The protein operates within protein modification; protein ubiquitination. In terms of biological role, component of the anaphase promoting complex/cyclosome (APC/C), a cell cycle-regulated E3 ubiquitin-protein ligase complex that controls progression through mitosis and the G1 phase of the cell cycle. The sequence is that of Anaphase-promoting complex subunit 7 (anapc7) from Dictyostelium discoideum (Social amoeba).